Reading from the N-terminus, the 232-residue chain is Ornithine carbamoyltransferase (232 aa).

Carbamoyl phosphate is bound by residues glutamine 15, arginine 39, and 66–69 (HPTQ). L-ornithine contacts are provided by residues asparagine 99, aspartate 163, and 167–168 (SM). Residues 204-207 (HCLP) and threonine 232 contribute to the carbamoyl phosphate site.

This sequence belongs to the aspartate/ornithine carbamoyltransferase superfamily. OTCase family.

It localises to the cytoplasm. The enzyme catalyses carbamoyl phosphate + L-ornithine = L-citrulline + phosphate + H(+). It participates in amino-acid biosynthesis; L-arginine biosynthesis; L-arginine from L-ornithine and carbamoyl phosphate: step 1/3. Reversibly catalyzes the transfer of the carbamoyl group from carbamoyl phosphate (CP) to the N(epsilon) atom of ornithine (ORN) to produce L-citrulline. The protein is Ornithine carbamoyltransferase (argF) of Neisseria perflava.